The primary structure comprises 465 residues: UDP-N-acetylmuramate--L-alanine ligase (465 aa).

Position 115–121 (115–121) interacts with ATP; the sequence is GAHGKTT.

It belongs to the MurCDEF family.

The protein resides in the cytoplasm. It catalyses the reaction UDP-N-acetyl-alpha-D-muramate + L-alanine + ATP = UDP-N-acetyl-alpha-D-muramoyl-L-alanine + ADP + phosphate + H(+). Its pathway is cell wall biogenesis; peptidoglycan biosynthesis. Cell wall formation. This Coxiella burnetii (strain CbuK_Q154) (Coxiella burnetii (strain Q154)) protein is UDP-N-acetylmuramate--L-alanine ligase.